A 384-amino-acid chain; its full sequence is L-lactate dehydrogenase (384 aa).

Residues 1–380 (MIISSSNDYR…NESCLVEMNK (380 aa)) form the FMN hydroxy acid dehydrogenase domain. Tyrosine 24 contacts substrate. Serine 106 and glutamine 127 together coordinate FMN. Residue tyrosine 129 participates in substrate binding. Residue threonine 155 participates in FMN binding. Residue arginine 164 coordinates substrate. Lysine 251 is an FMN binding site. Histidine 275 acts as the Proton acceptor in catalysis. Arginine 278 serves as a coordination point for substrate. 306 to 330 (DSGIRNGLDVVRMLALGADSVMLGR) lines the FMN pocket.

This sequence belongs to the FMN-dependent alpha-hydroxy acid dehydrogenase family. The cofactor is FMN.

The protein localises to the cell inner membrane. It catalyses the reaction (S)-lactate + A = pyruvate + AH2. Catalyzes the conversion of L-lactate to pyruvate. Is coupled to the respiratory chain. The sequence is that of L-lactate dehydrogenase from Acinetobacter baylyi (strain ATCC 33305 / BD413 / ADP1).